Reading from the N-terminus, the 612-residue chain is uncharacterized protein (612 aa).

Over residues 176 to 196 (LVQRNNATTSPTTDSASENNE) the composition is skewed to polar residues. Residues 176–203 (LVQRNNATTSPTTDSASENNESVPSLTS) form a disordered region.

The protein to yeast YNL034w.

This is an uncharacterized protein from Saccharomyces cerevisiae (strain ATCC 204508 / S288c) (Baker's yeast).